Here is a 59-residue protein sequence, read N- to C-terminus: Protein B3 (59 aa).

In Homo sapiens (Human), this protein is Protein B3 (B3).